The primary structure comprises 296 residues: Probable porphobilinogen deaminase (296 aa).

Cysteine 241 is modified (S-(dipyrrolylmethanemethyl)cysteine).

The protein belongs to the HMBS family. Requires dipyrromethane as cofactor.

It carries out the reaction 4 porphobilinogen + H2O = hydroxymethylbilane + 4 NH4(+). Its pathway is porphyrin-containing compound metabolism; protoporphyrin-IX biosynthesis; coproporphyrinogen-III from 5-aminolevulinate: step 2/4. Tetrapolymerization of the monopyrrole PBG into the hydroxymethylbilane pre-uroporphyrinogen in several discrete steps. This is Probable porphobilinogen deaminase from Pyrobaculum neutrophilum (strain DSM 2338 / JCM 9278 / NBRC 100436 / V24Sta) (Thermoproteus neutrophilus).